The sequence spans 739 residues: Catalase-peroxidase (739 aa).

The tract at residues M1–Q20 is disordered. A cross-link (tryptophyl-tyrosyl-methioninium (Trp-Tyr) (with M-243)) is located at residues W94 to Y217. H95 acts as the Proton acceptor in catalysis. A cross-link (tryptophyl-tyrosyl-methioninium (Tyr-Met) (with W-94)) is located at residues Y217 to M243. Residue H258 participates in heme b binding.

The protein belongs to the peroxidase family. Peroxidase/catalase subfamily. As to quaternary structure, homodimer or homotetramer. Requires heme b as cofactor. In terms of processing, formation of the three residue Trp-Tyr-Met cross-link is important for the catalase, but not the peroxidase activity of the enzyme.

The protein localises to the cytoplasm. It catalyses the reaction H2O2 + AH2 = A + 2 H2O. The enzyme catalyses 2 H2O2 = O2 + 2 H2O. In terms of biological role, bifunctional enzyme with both catalase and broad-spectrum peroxidase activity. The protein is Catalase-peroxidase of Emericella nidulans (strain FGSC A4 / ATCC 38163 / CBS 112.46 / NRRL 194 / M139) (Aspergillus nidulans).